Reading from the N-terminus, the 424-residue chain is Probable ribonuclease FAU-1 (424 aa).

It belongs to the FAU-1 family.

Functionally, probable RNase involved in rRNA stability through maturation and/or degradation of precursor rRNAs. Binds to RNA in loop regions with AU-rich sequences. The sequence is that of Probable ribonuclease FAU-1 from Saccharolobus islandicus (strain Y.G.57.14 / Yellowstone #1) (Sulfolobus islandicus).